A 184-amino-acid polypeptide reads, in one-letter code: Guanylate kinase (184 aa).

The 179-residue stretch at 5 to 183 (KKLIILTGPS…TAKRIIKLIQ (179 aa)) folds into the Guanylate kinase-like domain. 12–19 (GPSGVGKG) contributes to the ATP binding site.

Belongs to the guanylate kinase family.

The protein localises to the cytoplasm. The enzyme catalyses GMP + ATP = GDP + ADP. In terms of biological role, essential for recycling GMP and indirectly, cGMP. This chain is Guanylate kinase, found in Prochlorococcus marinus (strain MIT 9312).